We begin with the raw amino-acid sequence, 393 residues long: Cysteine protease ATG4B (393 aa).

Residue Met-1 is modified to N-acetylmethionine. The residue at position 34 (Ser-34) is a Phosphoserine. Cys-74 (nucleophile) is an active-site residue. Position 189 is an S-nitrosocysteine (Cys-189). Catalysis depends on residues Asp-278 and His-280. S-nitrosocysteine is present on residues Cys-292 and Cys-301. Residues Cys-292 and Cys-361 are joined by a disulfide bond. Phosphoserine is present on residues Ser-316 and Ser-383. Positions Phe-388–Leu-391 match the LIR motif. Residue Ser-392 is modified to Phosphoserine.

The protein belongs to the peptidase C54 family. Interacts with PFKP; promoting phosphorylation of ATG4B at Ser-34. Interacts with GBP7. Phosphorylation at Ser-383 and Ser-392 promotes autophagy by increasing protein delipidation activity without affecting proteolytic activation of ATG8 proteins. Phosphorylation at Ser-316 by ULK1 inhibits autophagy by decreasing both proteolytic activation and delipidation activities. Phosphorylation at Ser-316 is dephosphorylated by protein phosphatase 2A (PP2A). Phosphorylation at Ser-34 by AKT2 promotes its hydrolase activity, leading to increased proteolytic activation and delipidation of ATG8 family proteins. Phosphorylation at Ser-34 by AKT1 promotes mitochondrial localization and inhibition of the F1F0-ATP synthase activity, leading to elevation of mitochondrial reactive oxygen species (ROS). In terms of processing, ubiquitinated by RNF5, leading to its degradation by the proteasome. Post-translationally, S-nitrosylation at Cys-189 and Cys-292 in response to high glucose decreases both proteolytic activation and delipidation activities. O-glycosylated by OGT, leading to increase protease activity, thereby promoting the proteolytic activation of ATG8 family proteins. In terms of processing, forms reversible intrachain disulfide bonds in response to oxidative stress. Forms interchain disulfide bonds, leading to formation of homooligomers in response to oxidation.

The protein localises to the cytoplasm. Its subcellular location is the cytosol. It localises to the cytoplasmic vesicle. It is found in the autophagosome. The protein resides in the endoplasmic reticulum. The protein localises to the mitochondrion. It carries out the reaction [protein]-C-terminal L-amino acid-glycyl-phosphatidylethanolamide + H2O = [protein]-C-terminal L-amino acid-glycine + a 1,2-diacyl-sn-glycero-3-phosphoethanolamine. It catalyses the reaction [protein]-C-terminal L-amino acid-glycyl-phosphatidylserine + H2O = [protein]-C-terminal L-amino acid-glycine + a 1,2-diacyl-sn-glycero-3-phospho-L-serine. With respect to regulation, inhibited by N-ethylmaleimide. Redox-regulated during autophagy since reducing conditions activate ATG4A whereas an oxidizing environment such as the presence of H(2)O(2) inhibits its activity. The cysteine protease activity compounds is inhibited by styrylquinoline compounds 4-28 and LV-320. Functionally, cysteine protease that plays a key role in autophagy by mediating both proteolytic activation and delipidation of ATG8 family proteins. Required for canonical autophagy (macroautophagy), non-canonical autophagy as well as for mitophagy. The protease activity is required for proteolytic activation of ATG8 family proteins: cleaves the C-terminal amino acid of ATG8 proteins MAP1LC3A, MAP1LC3B, MAP1LC3C, GABARAPL1, GABARAPL2 and GABARAP, to reveal a C-terminal glycine. Exposure of the glycine at the C-terminus is essential for ATG8 proteins conjugation to phosphatidylethanolamine (PE) and insertion to membranes, which is necessary for autophagy. Protease activity is also required to counteract formation of high-molecular weight conjugates of ATG8 proteins (ATG8ylation): acts as a deubiquitinating-like enzyme that removes ATG8 conjugated to other proteins, such as ATG3. In addition to the protease activity, also mediates delipidation of ATG8 family proteins. Catalyzes delipidation of PE-conjugated forms of ATG8 proteins during macroautophagy. Also involved in non-canonical autophagy, a parallel pathway involving conjugation of ATG8 proteins to single membranes at endolysosomal compartments, by catalyzing delipidation of ATG8 proteins conjugated to phosphatidylserine (PS). Compared to other members of the family (ATG4A, ATG4C or ATG4C), constitutes the major protein for proteolytic activation of ATG8 proteins, while it displays weaker delipidation activity than other ATG4 paralogs. Involved in phagophore growth during mitophagy independently of its protease activity and of ATG8 proteins: acts by regulating ATG9A trafficking to mitochondria and promoting phagophore-endoplasmic reticulum contacts during the lipid transfer phase of mitophagy. The sequence is that of Cysteine protease ATG4B from Mus musculus (Mouse).